A 732-amino-acid polypeptide reads, in one-letter code: Sesterbrasiliatriene synthase PbSS (732 aa).

The terpene cyclase stretch occupies residues Met1–Thr342. Residues Asp105 and Asp109 each coordinate Mg(2+). Substrate is bound by residues Asp105, Asp109, Arg193–Glu196, Phe242–Phe246, and Arg334–Tyr335. The short motif at Asp105–Asp109 is the DDXXD 1 element. An NSE/DTE motif is present at residues Asp238–Phe246. A prenyltransferase region spans residues Thr343 to Leu732. Disordered regions lie at residues Lys371 to Ser390 and Ala398 to Asn420. The segment covering Asn411–Asn420 has biased composition (basic and acidic residues). 3 residues coordinate isopentenyl diphosphate: Lys453, Arg456, and His485. Mg(2+) is bound by residues Asp492 and Asp496. The short motif at Asp492–Asp496 is the DDXXD 2 element. Arg501 is a dimethylallyl diphosphate binding site. Arg502 provides a ligand contact to isopentenyl diphosphate. Dimethylallyl diphosphate contacts are provided by Lys579, Thr580, Gln615, Asn622, Lys632, and Lys642.

This sequence in the N-terminal section; belongs to the terpene synthase family. It in the C-terminal section; belongs to the FPP/GGPP synthase family. In terms of assembly, hexamer. The cofactor is Mg(2+).

It catalyses the reaction isopentenyl diphosphate + (2E,6E)-farnesyl diphosphate = (2E,6E,10E)-geranylgeranyl diphosphate + diphosphate. It carries out the reaction isopentenyl diphosphate + (2E,6E,10E)-geranylgeranyl diphosphate = (2E,6E,10E,14E)-geranylfarnesyl diphosphate + diphosphate. The protein operates within secondary metabolite biosynthesis; terpenoid biosynthesis. In terms of biological role, bifunctional sesterterpene synthase that possesses both prenyl transferase and terpene cyclase activity, converting isopentenyl diphosphate and dimethylallyl diphosphate into geranylfarnesyl diphosphate (GFPP) and further converting GFPP into sesterbrasiliatriene. The protein is Sesterbrasiliatriene synthase PbSS (PbSS) of Penicillium brasilianum.